Consider the following 412-residue polypeptide: Indian hedgehog B protein (412 aa).

The signal sequence occupies residues Met1–Gly23. Cys24 is lipidated: N-palmitoyl cysteine. 7 residues coordinate Ca(2+): Glu89, Glu90, Asp95, Thr125, Glu126, Asp129, and Asp131. Residues His140, Asp147, and His182 each contribute to the Zn(2+) site. A lipid anchor (Cholesterol glycine ester) is attached at Gly197.

This sequence belongs to the hedgehog family. As to quaternary structure, multimer. Interacts with BOC and CDON. Interacts with PTCH1. Interacts with glypican GPC3. Post-translationally, cholesterylation is required for N-product targeting to lipid rafts and multimerization. The C-terminal domain displays an autoproteolysis activity and a cholesterol transferase activity. Both activities result in the cleavage of the full-length protein and covalent attachment of a cholesterol moiety to the C-terminal of the newly generated N-product. The N-product is the active species in both local and long-range signaling, whereas the C-product is degraded in the endoplasmic reticulum. In terms of processing, N-palmitoylation by HHAT of N-product is required for indian hedgehog protein N-product multimerization and full activity. In terms of tissue distribution, expressed exclusively in the notochord.

The protein resides in the cell membrane. It localises to the endoplasmic reticulum membrane. It is found in the golgi apparatus membrane. Its subcellular location is the secreted. It catalyses the reaction glycyl-L-cysteinyl-[protein] + cholesterol + H(+) = [protein]-C-terminal glycyl cholesterol ester + N-terminal L-cysteinyl-[protein]. Functionally, signal involved in the early induction and patterning of anterodorsal ectoderm, nervous system and somites. It is involved in the regulation of endochondral skeleton formation, and the development of retinal pigment epithelium (RPE), photoreceptors and periocular tissues. In terms of biological role, the C-terminal part of the indian hedgehog protein precursor displays an autoproteolysis and a cholesterol transferase activity. Both activities result in the cleavage of the full-length protein into two parts followed by the covalent attachment of a cholesterol moiety to the C-terminal of the newly generated N-product. Both activities occur in the endoplasmic reticulum. The dually lipidated indian hedgehog protein N-product is a morphogen which is essential for a variety of patterning events during development. Binds to the patched (PTCH1) receptor, which functions in association with smoothened (SMO), to activate the transcription of target genes. In the notochord, induces somite patterning and muscle pioneer differentiation. The protein is Indian hedgehog B protein (ihhb) of Danio rerio (Zebrafish).